The sequence spans 207 residues: Reticulon-1-A (207 aa).

Residues 21–207 (AIDLLYWRDI…AKIPGTKQKE (187 aa)) enclose the Reticulon domain. Helical transmembrane passes span 35 to 55 (IVFG…VVSV) and 139 to 159 (VLMW…LLIM).

In terms of tissue distribution, expressed in the animal hemisphere (presumptive neural ectoderm) of blastula and gastrula stage embryos, and along the anterior neural border, in the panplacodal primordium, and in the dorsolateral side of archenteron roof of late neurula embryos. At the tailbud stage, expression localizes to the central nervous system, including the spinal cord, prosencephalon, mesencephalon and rhombencephalon, as well as the lateral line placode, otic vesicle and pronephros.

It is found in the endoplasmic reticulum membrane. It localises to the nucleus. In terms of biological role, inhibits amyloid precursor protein processing, probably by blocking BACE1 activity. The sequence is that of Reticulon-1-A (rtn1-a) from Xenopus laevis (African clawed frog).